Here is a 439-residue protein sequence, read N- to C-terminus: Ribosomal protein uS12 methylthiotransferase RimO (439 aa).

The 113-residue stretch at 2-114 (SKLYLMSLGC…IDEMILKKTN (113 aa)) folds into the MTTase N-terminal domain. [4Fe-4S] cluster contacts are provided by Cys11, Cys45, Cys77, Cys146, Cys150, and Cys153. Residues 132–363 (TGSNSHAFIK…VDEVIEKSFE (232 aa)) enclose the Radical SAM core domain.

Belongs to the methylthiotransferase family. RimO subfamily. [4Fe-4S] cluster is required as a cofactor.

Its subcellular location is the cytoplasm. It catalyses the reaction L-aspartate(89)-[ribosomal protein uS12]-hydrogen + (sulfur carrier)-SH + AH2 + 2 S-adenosyl-L-methionine = 3-methylsulfanyl-L-aspartate(89)-[ribosomal protein uS12]-hydrogen + (sulfur carrier)-H + 5'-deoxyadenosine + L-methionine + A + S-adenosyl-L-homocysteine + 2 H(+). Catalyzes the methylthiolation of an aspartic acid residue of ribosomal protein uS12. The chain is Ribosomal protein uS12 methylthiotransferase RimO from Campylobacter jejuni subsp. jejuni serotype O:6 (strain 81116 / NCTC 11828).